The chain runs to 104 residues: uncharacterized protein (104 aa).

Transmembrane regions (helical) follow at residues 53–73 (IWGI…NWDF) and 74–94 (ILNL…LILI).

It localises to the cell membrane. This is an uncharacterized protein from Methanocaldococcus jannaschii (strain ATCC 43067 / DSM 2661 / JAL-1 / JCM 10045 / NBRC 100440) (Methanococcus jannaschii).